We begin with the raw amino-acid sequence, 204 residues long: MAGNGSAPDTATHQVRQFDQARAEAAVRELLFAIGENPDRHGLAETPARVARAYREMFAGLYTDPDSVLNTMFDEEHDELVLVKEIPLYSTCEHHLVSFHGVAHVGYIPGNDGRVTGLSKIARLVDLYAKRPQVQERLTSQIADALVKKLNPRGVIVVVEAEHLCMAMRGVRKPGAVTTTSAVRGLFKTNAASRAEALDLILRK.

Residues C92, H95, and C165 each coordinate Zn(2+).

Belongs to the GTP cyclohydrolase I family. Homomer.

The enzyme catalyses GTP + H2O = 7,8-dihydroneopterin 3'-triphosphate + formate + H(+). It functions in the pathway cofactor biosynthesis; 7,8-dihydroneopterin triphosphate biosynthesis; 7,8-dihydroneopterin triphosphate from GTP: step 1/1. The protein is GTP cyclohydrolase 1 of Mycobacterium avium (strain 104).